We begin with the raw amino-acid sequence, 501 residues long: Pyruvate kinase 1 (501 aa).

Arg50 serves as a coordination point for substrate. Positions 52, 54, 85, and 86 each coordinate K(+). ATP is bound at residue 52 to 55 (NFSH). Residues Arg92 and Lys178 each contribute to the ATP site. Glu243 is a binding site for Mg(2+). Substrate contacts are provided by Gly266, Asp267, and Thr299. Asp267 contributes to the Mg(2+) binding site.

Belongs to the pyruvate kinase family. Homotetramer. It depends on Mg(2+) as a cofactor. K(+) is required as a cofactor.

It catalyses the reaction pyruvate + ATP = phosphoenolpyruvate + ADP + H(+). The protein operates within carbohydrate degradation; glycolysis; pyruvate from D-glyceraldehyde 3-phosphate: step 5/5. The chain is Pyruvate kinase 1 (PYK1) from Candida glabrata (strain ATCC 2001 / BCRC 20586 / JCM 3761 / NBRC 0622 / NRRL Y-65 / CBS 138) (Yeast).